The primary structure comprises 691 residues: Dipeptidyl-peptidase 5 (691 aa).

The first 20 residues, Met1–Ala20, serve as a signal peptide directing secretion. Residues Ser549, Asp634, and His666 each act as charge relay system in the active site.

Belongs to the peptidase S9C family. Homodimer.

It localises to the periplasm. Functionally, catalyzes the removal of dipeptides from the N-terminus of oligopeptides. Prefers Ala and hydrophobic residues at the P1 position, and has no preference for P2 residues. Shows the highest dipeptidyl peptidase activity toward the synthetic substrate Lys-Ala-methylcoumaryl-7-amide (Lys-Ala-MCA). Is likely involved in amino acid metabolism and bacterial growth/survival of asaccharolytic P.endodontalis, that utilizes amino acids from extracellular proteinaceous nutrients as energy and carbon sources. The chain is Dipeptidyl-peptidase 5 from Porphyromonas endodontalis (strain ATCC 35406 / DSM 24491 / JCM 8526 / CCUG 16442 / BCRC 14492 / NCTC 13058 / HG 370) (Bacteroides endodontalis).